The chain runs to 322 residues: Polyisoprenyl-teichoic acid--peptidoglycan teichoic acid transferase TagT (322 aa).

At Met-1–Lys-19 the chain is on the cytoplasmic side. A helical; Signal-anchor for type II membrane protein membrane pass occupies residues Val-20 to Phe-40. The Extracellular segment spans residues Val-41–Val-322.

It belongs to the LytR/CpsA/Psr (LCP) family. As to quaternary structure, interacts with MreB.

The protein resides in the cell membrane. Its pathway is cell wall biogenesis. In terms of biological role, may catalyze the final step in cell wall teichoic acid biosynthesis, the transfer of the anionic cell wall polymers (APs) from their lipid-linked precursor to the cell wall peptidoglycan (PG). In Bacillus subtilis (strain 168), this protein is Polyisoprenyl-teichoic acid--peptidoglycan teichoic acid transferase TagT.